Here is a 184-residue protein sequence, read N- to C-terminus: UPF0340 protein TTE0860 (184 aa).

This sequence belongs to the UPF0340 family.

The sequence is that of UPF0340 protein TTE0860 from Caldanaerobacter subterraneus subsp. tengcongensis (strain DSM 15242 / JCM 11007 / NBRC 100824 / MB4) (Thermoanaerobacter tengcongensis).